The following is a 314-amino-acid chain: Ribosomal protein L11 methyltransferase (314 aa).

The S-adenosyl-L-methionine site is built by Thr-163, Gly-184, Asp-206, and Asn-248.

It belongs to the methyltransferase superfamily. PrmA family.

It localises to the cytoplasm. The enzyme catalyses L-lysyl-[protein] + 3 S-adenosyl-L-methionine = N(6),N(6),N(6)-trimethyl-L-lysyl-[protein] + 3 S-adenosyl-L-homocysteine + 3 H(+). Its function is as follows. Methylates ribosomal protein L11. This chain is Ribosomal protein L11 methyltransferase, found in Lactobacillus delbrueckii subsp. bulgaricus (strain ATCC 11842 / DSM 20081 / BCRC 10696 / JCM 1002 / NBRC 13953 / NCIMB 11778 / NCTC 12712 / WDCM 00102 / Lb 14).